The sequence spans 179 residues: Ribosome maturation factor RimM (179 aa).

The PRC barrel domain occupies 96–179 (DNEFYWVDLI…KITVDWGLDY (84 aa)).

It belongs to the RimM family. As to quaternary structure, binds ribosomal protein uS19.

The protein localises to the cytoplasm. Its function is as follows. An accessory protein needed during the final step in the assembly of 30S ribosomal subunit, possibly for assembly of the head region. Essential for efficient processing of 16S rRNA. May be needed both before and after RbfA during the maturation of 16S rRNA. It has affinity for free ribosomal 30S subunits but not for 70S ribosomes. In Janthinobacterium sp. (strain Marseille) (Minibacterium massiliensis), this protein is Ribosome maturation factor RimM.